A 927-amino-acid chain; its full sequence is Sodium/calcium exchanger 3 (927 aa).

Positions 1-30 (MAWLRLQPLTSAFLHFGLVTFVLFLNGLRA) are cleaved as a signal peptide. Residues 31-73 (EAGDLRDVPSAGQNNESCSGSSDCKEGVILPIWYPENPSLGDK) are Extracellular-facing. A glycan (N-linked (GlcNAc...) asparagine) is linked at asparagine 45. The helical transmembrane segment at 74-94 (IARVIVYFVALIYMFLGVSII) threads the bilayer. Residues 95–147 (ADRFMASIEVITSQEREVTIKKPNGETSTTTIRVWNETVSNLTLMALGSSAPE) are Cytoplasmic-facing. Residues 140-180 (ALGSSAPEILLSLIEVCGHGFIAGDLGPSTIVGSAAFNMFI) form an Alpha-1 repeat. Residues 148 to 168 (ILLSLIEVCGHGFIAGDLGPS) form a helical membrane-spanning segment. A topological domain (extracellular) is located at residue threonine 169. A helical membrane pass occupies residues 170-190 (IVGSAAFNMFIIIGICVYVIP). Residues 191–202 (DGETRKIKHLRV) are Cytoplasmic-facing. A helical membrane pass occupies residues 203-223 (FFVTAAWSVFAYIWLYMILAV). The Extracellular portion of the chain corresponds to 224 to 230 (FSPGVVQ). Residues 231-251 (VWEGLLTLFFFPVCVLLAWVA) traverse the membrane as a helical segment. The Cytoplasmic segment spans residues 252 to 726 (DKRLLFYKYM…DESGEERLPS (475 aa)). Residues 253 to 272 (KRLLFYKYMHKRYRTDKHRG) form a putative calmodulin-binding region region. Calx-beta domains lie at 386–485 (VHTD…VRLS) and 519–619 (ATVT…IALG). Ca(2+) contacts are provided by glutamate 409, aspartate 445, aspartate 470, aspartate 471, isoleucine 473, glutamate 475, glutamate 478, aspartate 525, aspartate 526, aspartate 527, glutamate 543, aspartate 579, glutamate 606, glutamate 607, and glutamate 672. A helical membrane pass occupies residues 727 to 747 (CFDYVMHFLTVFWKVLFACVP). The Extracellular portion of the chain corresponds to 748–754 (PTEYCHG). A helical membrane pass occupies residues 755–775 (WACFVVSILIIGMLTAIIGDL). Over 776–778 (ASH) the chain is Cytoplasmic. A helical transmembrane segment spans residues 779–799 (FGCTIGLKDSVTAVVFVAFGT). The stretch at 796-832 (AFGTSVPDTFASKAAALQDVYADASIGNVTGSNAVNV) is one Alpha-2 repeat. The Extracellular segment spans residues 800–828 (SVPDTFASKAAALQDVYADASIGNVTGSN). Asparagine 823 carries an N-linked (GlcNAc...) asparagine glycan. A helical membrane pass occupies residues 829–849 (AVNVFLGIGLAWSVAAIYWAM). The Cytoplasmic segment spans residues 850 to 860 (QGQEFHVSAGT). The helical transmembrane segment at 861–881 (LAFSVTLFTIFAFVCLSVLLY) threads the bilayer. Residues 882 to 903 (RRRPHLGGELGGPRGCKLATTW) lie on the Extracellular side of the membrane. A helical transmembrane segment spans residues 904–924 (LFVSLWLLYVLFATLEAYCYI). At 925 to 927 (KGF) the chain is on the cytoplasmic side.

Belongs to the Ca(2+):cation antiporter (CaCA) (TC 2.A.19) family. SLC8 subfamily. In terms of assembly, interacts with AKAP1. As to expression, detected in neurons in brain cortex and hippocampus. Detected in pyramidal cell bodies and processes, in granule cells and interneurons in the CA1 and CA3 region of the hippocampus. Detected on astrocyte processes in brain cortex. Detected on endothelial cells in hippocampus capillaries (at protein level). Restricted to brain and skeletal muscle.

Its subcellular location is the cell membrane. The protein resides in the perikaryon. The protein localises to the cell projection. It localises to the dendrite. It is found in the dendritic spine. Its subcellular location is the sarcolemma. The protein resides in the cytoplasm. The protein localises to the sarcoplasm. It localises to the cell junction. It is found in the mitochondrion outer membrane. Its subcellular location is the endoplasmic reticulum membrane. The protein resides in the perinuclear region. The catalysed reaction is Ca(2+)(in) + 3 Na(+)(out) = Ca(2+)(out) + 3 Na(+)(in). Calcium transport is down-regulated by Na(+) and stimulated by Ca(2+). In terms of biological role, mediates the electrogenic exchange of Ca(2+) against Na(+) ions across the cell membrane, and thereby contributes to the regulation of cytoplasmic Ca(2+) levels and Ca(2+)-dependent cellular processes. Contributes to cellular Ca(2+) homeostasis in excitable cells, both in muscle and in brain. In a first phase, voltage-gated channels mediate the rapid increase of cytoplasmic Ca(2+) levels due to release of Ca(2+) stores from the endoplasmic reticulum. SLC8A3 mediates the export of Ca(2+) from the cell during the next phase, so that cytoplasmic Ca(2+) levels rapidly return to baseline. Contributes to Ca(2+) transport during excitation-contraction coupling in muscle. In neurons, contributes to the rapid decrease of cytoplasmic Ca(2+) levels back to baseline after neuronal activation, and thereby contributes to modulate synaptic plasticity, learning and memory. Required for normal oligodendrocyte differentiation and for normal myelination. Mediates Ca(2+) efflux from mitochondria and contributes to mitochondrial Ca(2+) ion homeostasis. The polypeptide is Sodium/calcium exchanger 3 (Slc8a3) (Rattus norvegicus (Rat)).